The sequence spans 182 residues: Probable RNA 2'-phosphotransferase (182 aa).

This sequence belongs to the KptA/TPT1 family.

In terms of biological role, removes the 2'-phosphate from RNA via an intermediate in which the phosphate is ADP-ribosylated by NAD followed by a presumed transesterification to release the RNA and generate ADP-ribose 1''-2''-cyclic phosphate (APPR&gt;P). May function as an ADP-ribosylase. This is Probable RNA 2'-phosphotransferase from Acetivibrio thermocellus (strain ATCC 27405 / DSM 1237 / JCM 9322 / NBRC 103400 / NCIMB 10682 / NRRL B-4536 / VPI 7372) (Clostridium thermocellum).